The chain runs to 249 residues: 2,5-diamino-6-ribosylamino-4(3H)-pyrimidinone 5'-phosphate reductase (249 aa).

NADP(+)-binding positions include Thr79, Asp83, Met164, and 187–191 (GGIVI).

It belongs to the HTP reductase family. In terms of assembly, homodimer.

It catalyses the reaction 2,5-diamino-6-(1-D-ribitylamino)pyrimidin-4(3H)-one 5'-phosphate + NADP(+) = 2,5-diamino-6-(1-D-ribosylamino)pyrimidin-4(3H)-one 5'-phosphate + NADPH + H(+). The enzyme catalyses 2,5-diamino-6-(1-D-ribitylamino)pyrimidin-4(3H)-one 5'-phosphate + NAD(+) = 2,5-diamino-6-(1-D-ribosylamino)pyrimidin-4(3H)-one 5'-phosphate + NADH + H(+). Its pathway is cofactor biosynthesis; riboflavin biosynthesis. Catalyzes an early step in riboflavin biosynthesis, the NADPH-dependent reduction of the ribose side chain of 2,5-diamino-6-ribosylamino-4(3H)-pyrimidinone 5'-phosphate, yielding 2,5-diamino-6-ribitylamino-4(3H)-pyrimidinone 5'-phosphate. This Kluyveromyces marxianus (Yeast) protein is 2,5-diamino-6-ribosylamino-4(3H)-pyrimidinone 5'-phosphate reductase (RIB7).